We begin with the raw amino-acid sequence, 250 residues long: 1-(5-phosphoribosyl)-5-[(5-phosphoribosylamino)methylideneamino] imidazole-4-carboxamide isomerase (250 aa).

Aspartate 7 acts as the Proton acceptor in catalysis. Catalysis depends on aspartate 129, which acts as the Proton donor.

This sequence belongs to the HisA/HisF family.

The protein localises to the cytoplasm. The catalysed reaction is 1-(5-phospho-beta-D-ribosyl)-5-[(5-phospho-beta-D-ribosylamino)methylideneamino]imidazole-4-carboxamide = 5-[(5-phospho-1-deoxy-D-ribulos-1-ylimino)methylamino]-1-(5-phospho-beta-D-ribosyl)imidazole-4-carboxamide. It functions in the pathway amino-acid biosynthesis; L-histidine biosynthesis; L-histidine from 5-phospho-alpha-D-ribose 1-diphosphate: step 4/9. In Shewanella denitrificans (strain OS217 / ATCC BAA-1090 / DSM 15013), this protein is 1-(5-phosphoribosyl)-5-[(5-phosphoribosylamino)methylideneamino] imidazole-4-carboxamide isomerase.